Consider the following 428-residue polypeptide: GTPase Obg (428 aa).

Residues 1–158 (MFVDQVKIYV…RDVILELKVL (158 aa)) form the Obg domain. One can recognise an OBG-type G domain in the interval 159-329 (ADVGLVGFPS…LLFEVANLIE (171 aa)). Residues 165 to 172 (GFPSVGKS), 190 to 194 (FTTIV), 212 to 215 (DLPG), 282 to 285 (NKMD), and 310 to 312 (SAV) contribute to the GTP site. Mg(2+) is bound by residues Ser-172 and Thr-192. Residues 350–428 (KFDTEGVKFE…ILEYEFEFID (79 aa)) enclose the OCT domain.

It belongs to the TRAFAC class OBG-HflX-like GTPase superfamily. OBG GTPase family. Monomer. Mg(2+) serves as cofactor.

It localises to the cytoplasm. Functionally, an essential GTPase which binds GTP, GDP and possibly (p)ppGpp with moderate affinity, with high nucleotide exchange rates and a fairly low GTP hydrolysis rate. Plays a role in control of the cell cycle, stress response, ribosome biogenesis and in those bacteria that undergo differentiation, in morphogenesis control. The protein is GTPase Obg of Bacillus cereus (strain B4264).